Here is a 331-residue protein sequence, read N- to C-terminus: Histone-lysine N-methyltransferase, H3 lysine-9 specific dim-5 (331 aa).

Residues 77 to 159 (VGCSCASDEE…DCPNRVVERG (83 aa)) enclose the Pre-SET domain. The Zn(2+) site is built by C79, C81, C87, C92, C94, C141, C145, C147, and C151. Residues 162–297 (VPLQIFRTKD…KGTELTFDYV (136 aa)) form the SET domain. S-adenosyl-L-methionine-binding positions include 172–174 (RGW), D215, Y217, R251, and 254–255 (NH). The Zn(2+) site is built by C257, C319, C321, and C326. Residues 315 to 331 (EMTKCLCGTAKCRGYLW) enclose the Post-SET domain.

This sequence belongs to the class V-like SAM-binding methyltransferase superfamily. Histone-lysine methyltransferase family. Suvar3-9 subfamily.

It localises to the nucleus. Its subcellular location is the chromosome. It carries out the reaction L-lysyl(9)-[histone H3] + 3 S-adenosyl-L-methionine = N(6),N(6),N(6)-trimethyl-L-lysyl(9)-[histone H3] + 3 S-adenosyl-L-homocysteine + 3 H(+). Its function is as follows. Histone methyltransferase that specifically trimethylates histone H3 to form H3K9me3. H3K9me3 marks chromatin regions for DNA methylation. Dim-5 recognizes Arg-8 to Gly-12 of the H3 tail with Thr-11 and Gly-12 being the most important specificity determinants, the recognition of whcih is important to distinguish H3K9 from H3K27 and H4K20. In Neurospora crassa (strain ATCC 24698 / 74-OR23-1A / CBS 708.71 / DSM 1257 / FGSC 987), this protein is Histone-lysine N-methyltransferase, H3 lysine-9 specific dim-5 (dim-5).